A 280-amino-acid polypeptide reads, in one-letter code: Probable endonuclease 4 (280 aa).

Zn(2+)-binding residues include His-69, His-109, Glu-145, Asp-179, His-182, His-216, Asp-229, His-231, and Glu-261.

The protein belongs to the AP endonuclease 2 family. The cofactor is Zn(2+).

The catalysed reaction is Endonucleolytic cleavage to 5'-phosphooligonucleotide end-products.. In terms of biological role, endonuclease IV plays a role in DNA repair. It cleaves phosphodiester bonds at apurinic or apyrimidinic (AP) sites, generating a 3'-hydroxyl group and a 5'-terminal sugar phosphate. The sequence is that of Probable endonuclease 4 from Pelodictyon phaeoclathratiforme (strain DSM 5477 / BU-1).